The following is a 571-amino-acid chain: UvrABC system protein C (571 aa).

Positions 15–93 constitute a GIY-YIG domain; it reads TSPGVYLWKD…IDRYNPEFNI (79 aa). Residues 184 to 219 form the UVR domain; that stretch reads NNYINELTNKMHQAANNMQFELALFLRDGLTYLKKL.

This sequence belongs to the UvrC family. In terms of assembly, interacts with UvrB in an incision complex.

The protein localises to the cytoplasm. In terms of biological role, the UvrABC repair system catalyzes the recognition and processing of DNA lesions. UvrC both incises the 5' and 3' sides of the lesion. The N-terminal half is responsible for the 3' incision and the C-terminal half is responsible for the 5' incision. The sequence is that of UvrABC system protein C from Mycoplasmopsis bovis (strain ATCC 25523 / DSM 22781 / NCTC 10131 / PG45) (Mycoplasma bovis).